The sequence spans 269 residues: Tryptophan synthase alpha chain (269 aa).

Active-site proton acceptor residues include glutamate 50 and aspartate 61.

It belongs to the TrpA family. In terms of assembly, tetramer of two alpha and two beta chains.

It carries out the reaction (1S,2R)-1-C-(indol-3-yl)glycerol 3-phosphate + L-serine = D-glyceraldehyde 3-phosphate + L-tryptophan + H2O. The protein operates within amino-acid biosynthesis; L-tryptophan biosynthesis; L-tryptophan from chorismate: step 5/5. In terms of biological role, the alpha subunit is responsible for the aldol cleavage of indoleglycerol phosphate to indole and glyceraldehyde 3-phosphate. The protein is Tryptophan synthase alpha chain of Francisella tularensis subsp. holarctica (strain FTNF002-00 / FTA).